A 177-amino-acid chain; its full sequence is MIIIDGKNYACVVCLRGHRGSSCQHQERALIEVRTRGRPLLCKKCRAIKQQLKSNLKCVCHLQPFLPFANEYQELLNFTQKNPILASLFLFSTDKDIMNSSLNPASQAYTFDLGRTLPISEDILGYRKPLSLTDASNRIDASQLNEKENDSFTINQEADIFNFAKYLHSKDDISGIP.

Positions 1–40 (MIIIDGKNYACVVCLRGHRGSSCQHQERALIEVRTRGRPL) form a DNA-binding region, copper-fist. 4 residues coordinate Zn(2+): Cys-11, Cys-14, Cys-23, and His-25.

The protein localises to the nucleus. The polypeptide is Copper-binding regulatory protein cuf2 (cuf2) (Schizosaccharomyces pombe (strain 972 / ATCC 24843) (Fission yeast)).